The following is a 372-amino-acid chain: GDP-mannose 4,6 dehydratase (372 aa).

Positions 1–20 (MAHAPARCPSARGSGDGEMG) are disordered. The residue at position 2 (Ala2) is an N-acetylalanine. NADP(+) contacts are provided by residues 30–35 (GITGQD), 55–58 (RRSS), 86–87 (DL), 108–112 (LGAQS), and Tyr123. Thr155 is an active-site residue. Active-site nucleophile residues include Glu157 and Tyr179. NADP(+)-binding residues include Lys183, His209, and Arg214. The residue at position 323 (Tyr323) is a Phosphotyrosine.

It belongs to the NAD(P)-dependent epimerase/dehydratase family. GDP-mannose 4,6-dehydratase subfamily. It depends on NADP(+) as a cofactor. In terms of tissue distribution, highly expressed in pancreas and small intestine. Expressed in thymus, protstate, colon, heart, placenta, liver and kidney. Expressed at low levels in spleen, testis, brain and lung.

It carries out the reaction GDP-alpha-D-mannose = GDP-4-dehydro-alpha-D-rhamnose + H2O. Its pathway is nucleotide-sugar biosynthesis; GDP-L-fucose biosynthesis via de novo pathway; GDP-L-fucose from GDP-alpha-D-mannose: step 1/2. With respect to regulation, inhibited by GDP-fucose. Its function is as follows. Catalyzes the conversion of GDP-D-mannose to GDP-4-dehydro-6-deoxy-D-mannose. The sequence is that of GDP-mannose 4,6 dehydratase from Homo sapiens (Human).